The following is a 190-amino-acid chain: Adenylate kinase (190 aa).

11 to 16 lines the ATP pocket; sequence GAGKGT. Residues 31 to 60 form an NMP region; that stretch reads STGDIFRFNIKNETELGKLAKTFMDKGDLV. Residues Thr-32, Arg-37, 58-60, 86-89, and Gln-93 each bind AMP; these read DLV and GFPR. An LID region spans residues 127–137; sequence ERGKTSGRVDD. Residue Arg-128 coordinates ATP. AMP contacts are provided by Arg-134 and Arg-146. Residue Gly-174 coordinates ATP.

It belongs to the adenylate kinase family. As to quaternary structure, monomer.

Its subcellular location is the cytoplasm. It catalyses the reaction AMP + ATP = 2 ADP. It participates in purine metabolism; AMP biosynthesis via salvage pathway; AMP from ADP: step 1/1. In terms of biological role, catalyzes the reversible transfer of the terminal phosphate group between ATP and AMP. Plays an important role in cellular energy homeostasis and in adenine nucleotide metabolism. This Flavobacterium psychrophilum (strain ATCC 49511 / DSM 21280 / CIP 103535 / JIP02/86) protein is Adenylate kinase.